A 367-amino-acid chain; its full sequence is CCCH-type zinc finger protein moe-3 (367 aa).

Residues M1–P15 are compositionally biased toward basic and acidic residues. The disordered stretch occupies residues M1 to L57. Residues S30–G49 are compositionally biased toward low complexity. Positions E63–L92 form a coiled coil. Positions S107 to Q126 are disordered. C3H1-type zinc fingers lie at residues S130–E158 and K172–N200. Residues N235–S268 form a disordered region. Positions M252–S268 are enriched in low complexity.

Exclusively expressed in the hermaphrodite gonad. Weakly distributed throughout gonadal oocytes from the mitotic stage to the developing diakinesis stage, with expression restricted to the distal region of the gonad.

In terms of biological role, zinc-finger protein that may play a role in oocyte maturation and fertility. This chain is CCCH-type zinc finger protein moe-3, found in Caenorhabditis elegans.